The sequence spans 378 residues: Queuine tRNA-ribosyltransferase (378 aa).

Residue D92 is the Proton acceptor of the active site. Substrate is bound by residues 92–96, D146, Q188, and G215; that span reads DSGGF. Positions 246–252 are RNA binding; that stretch reads GVGTHLE. D265 serves as the catalytic Nucleophile. Positions 270–274 are RNA binding; important for wobble base 34 recognition; that stretch reads TRLAR. Residues C303, C305, C308, and H334 each contribute to the Zn(2+) site.

Belongs to the queuine tRNA-ribosyltransferase family. Homodimer. Within each dimer, one monomer is responsible for RNA recognition and catalysis, while the other monomer binds to the replacement base PreQ1. Requires Zn(2+) as cofactor.

It catalyses the reaction 7-aminomethyl-7-carbaguanine + guanosine(34) in tRNA = 7-aminomethyl-7-carbaguanosine(34) in tRNA + guanine. It functions in the pathway tRNA modification; tRNA-queuosine biosynthesis. Catalyzes the base-exchange of a guanine (G) residue with the queuine precursor 7-aminomethyl-7-deazaguanine (PreQ1) at position 34 (anticodon wobble position) in tRNAs with GU(N) anticodons (tRNA-Asp, -Asn, -His and -Tyr). Catalysis occurs through a double-displacement mechanism. The nucleophile active site attacks the C1' of nucleotide 34 to detach the guanine base from the RNA, forming a covalent enzyme-RNA intermediate. The proton acceptor active site deprotonates the incoming PreQ1, allowing a nucleophilic attack on the C1' of the ribose to form the product. After dissociation, two additional enzymatic reactions on the tRNA convert PreQ1 to queuine (Q), resulting in the hypermodified nucleoside queuosine (7-(((4,5-cis-dihydroxy-2-cyclopenten-1-yl)amino)methyl)-7-deazaguanosine). This Thermosynechococcus vestitus (strain NIES-2133 / IAM M-273 / BP-1) protein is Queuine tRNA-ribosyltransferase.